The following is a 709-amino-acid chain: Solute carrier organic anion transporter family member 2B1 (709 aa).

The interval 1-38 (MGPRIGPAGEVPQVPDKETKATMGTENTPGGKASPDPQ) is disordered. The Cytoplasmic segment spans residues 1–49 (MGPRIGPAGEVPQVPDKETKATMGTENTPGGKASPDPQDVRPSVFHNIK). The residue at position 34 (serine 34) is a Phosphoserine. A helical transmembrane segment spans residues 50–69 (LFVLCHSLLQLAQLMISGYL). The tract at residues 51 to 69 (FVLCHSLLQLAQLMISGYL) is required for E1S and taurocholate transport; required for transporter stability. Over 70 to 88 (KSSISTVEKRFGLSSQTSG) the chain is Extracellular. Residues 89-109 (LLASFNEVGNTALIVFVSYFG) traverse the membrane as a helical segment. Topologically, residues 110 to 115 (SRVHRP) are cytoplasmic. A helical membrane pass occupies residues 116–140 (RMIGYGAILVALAGLLMTLPHFISE). At 141-185 (PYRYDNTSPEDMPQDFKASLCLPTTSAPASAPSNGNCSSYTETQH) the chain is on the extracellular side. An N-linked (GlcNAc...) asparagine glycan is attached at asparagine 176. A helical transmembrane segment spans residues 186–215 (LSVVGIMFVAQTLLGVGGVPIQPFGISYID). Residues 216–234 (DFAHNSNSPLYLGILFAVT) are Cytoplasmic-facing. A helical transmembrane segment spans residues 235 to 255 (MMGPGLAFGLGSLMLRLYVDI). The Extracellular segment spans residues 256-273 (NQMPEGGISLTIKDPRWV). Residues 274-298 (GAWWLGFLIAAGAVALAAIPYFFFP) form a helical membrane-spanning segment. The Cytoplasmic segment spans residues 299-366 (KEMPKEKREL…IKVFPRVLLQ (68 aa)). Position 318 is a phosphothreonine (threonine 318). A disordered region spans residues 319-342 (DSPARKGKDSPSKQSPGESTKKQD). Phosphoserine is present on serine 320. A helical membrane pass occupies residues 367 to 388 (TLRHPIFLLVVLSQVCLSSMAA). At 389 to 408 (GMATFLPKFLERQFSITASY) the chain is on the extracellular side. A helical membrane pass occupies residues 409–432 (ANLLIGCLSFPSVIVGIVVGGVLV). The Cytoplasmic segment spans residues 433–436 (KRLH). The chain crosses the membrane as a helical span at residues 437–460 (LGPVGCGALCLLGMLLCLFFSLPL). The Extracellular segment spans residues 461–564 (FFIGCSSHQI…STCSHLVVPF (104 aa)). Positions 483 to 543 (LELSPSCMEA…VFYTNCSCVV (61 aa)) constitute a Kazal-like domain. 3 disulfides stabilise this stretch: cysteine 489/cysteine 520, cysteine 495/cysteine 516, and cysteine 504/cysteine 541. An N-linked (GlcNAc...) asparagine glycan is attached at asparagine 538. The chain crosses the membrane as a helical span at residues 565–587 (LLLVSLGSALACLTHTPSFMLIL). At 588-596 (RGVKKEDKT) the chain is on the cytoplasmic side. A helical transmembrane segment spans residues 597-622 (LAVGIQFMFLRILAWMPSPVIHGSAI). Residues 623 to 655 (DTTCVHWALSCGRRAVCRYYNNDLLRNRFIGLQ) are Extracellular-facing. The helical transmembrane segment at 656–673 (FFFKTGSVICFALVLAVL) threads the bilayer. Residues 674 to 709 (RQQDKEARTKESRSSPAVEQQLLVSGPGKKPEDSRV) are Cytoplasmic-facing. Residues 679–709 (EARTKESRSSPAVEQQLLVSGPGKKPEDSRV) form a disordered region.

Belongs to the organo anion transporter (TC 2.A.60) family. Strongly expressed in the liver, at the sinusoidal membrane of the hepatocytes. Expressed in the kidney. Expressed in placental trophoblasts and syncytiotrophoblast. Expressed in the small intestine. Expressed in the blood-brain barrier, in endothelial cells of brain capillaries. Expressed in the retina, in the inner nuclear layer and the inner plexiform layer. Expressed in skelettal muscles. In testis, primarily localized to the basal membrane of Sertoli cells and weakly expressed within the tubules. Also expressed in pancreas, lung, heart, colon, ovary and spleen. Expressed in fetal brain, heart, kidney, liver, lung, skeletal muscle, spleen and pancreas. As to expression, highest expression in brain. Predominant isoform compared to isoform 3 in small intestine duodenum, kidney, placenta, and skeletal muscle. In terms of tissue distribution, predominant isoform compared to isoform 1 in liver. Also expressed in small intestine duodenum, kidney, brain, placenta, and skeletal muscle.

Its subcellular location is the cell membrane. The protein resides in the basal cell membrane. It localises to the basolateral cell membrane. The protein localises to the apical cell membrane. It catalyses the reaction dehydroepiandrosterone 3-sulfate(out) = dehydroepiandrosterone 3-sulfate(in). The catalysed reaction is estrone 3-sulfate(out) = estrone 3-sulfate(in). The enzyme catalyses estrone 3-sulfate(out) + hydrogencarbonate(in) = estrone 3-sulfate(in) + hydrogencarbonate(out). It carries out the reaction taurocholate(out) = taurocholate(in). It catalyses the reaction coproporphyrin III(out) = coproporphyrin III(in). The catalysed reaction is substance P(out) = substance P(in). The enzyme catalyses pregnenolone sulfate(out) = pregnenolone sulfate(in). It carries out the reaction prostaglandin E2(out) = prostaglandin E2(in). It catalyses the reaction prostaglandin D2(out) = prostaglandin D2(in). The catalysed reaction is L-thyroxine(out) = L-thyroxine(in). Its activity is regulated as follows. E1S, DHEA-S and PregS transports are regulated by steroid hormones. In the case of testosterone, transport of E1S and DHEA-S was inhibited, whereas progesterone stimulated E1S, DHEA-S and PregS uptake. Progesterone stimulates high-affinity uptake of E1S whereas it inhibits low-affinity uptake of E1S. Progesterone doesn't affect the uptake of PGE2. Its function is as follows. Mediates the Na(+)-independent transport of steroid sulfate conjugates and other specific organic anions. Responsible for the transport of estrone 3-sulfate (E1S) through the basal membrane of syncytiotrophoblast, highlighting a potential role in the placental absorption of fetal-derived sulfated steroids including the steroid hormone precursor dehydroepiandrosterone sulfate (DHEA-S). Also facilitates the uptake of sulfated steroids at the basal/sinusoidal membrane of hepatocytes, therefore accounting for the major part of organic anions clearance of liver. Mediates the intestinal uptake of sulfated steroids. Mediates the uptake of the neurosteroids DHEA-S and pregnenolone sulfate (PregS) into the endothelial cells of the blood-brain barrier as the first step to enter the brain. Also plays a role in the reuptake of neuropeptides such as substance P/TAC1 and vasoactive intestinal peptide/VIP released from retinal neurons. May act as a heme transporter that promotes cellular iron availability via heme oxygenase/HMOX2 and independently of TFRC. Also transports heme by-product coproporphyrin III (CPIII), and may be involved in their hepatic disposition. Mediates the uptake of other substrates such as prostaglandins D2 (PGD2), E1 (PGE1) and E2 (PGE2), taurocholate, L-thyroxine, leukotriene C4 and thromboxane B2. May contribute to regulate the transport of organic compounds in testis across the blood-testis-barrier. Shows a pH-sensitive substrate specificity which may be ascribed to the protonation state of the binding site and leads to a stimulation of substrate transport in an acidic microenvironment. The exact transport mechanism has not been yet deciphered but most likely involves an anion exchange, coupling the cellular uptake of organic substrate with the efflux of an anionic compound. Hydrogencarbonate/HCO3(-) acts as a probable counteranion that exchanges for organic anions. Cytoplasmic glutamate may also act as counteranion in the placenta. An inwardly directed proton gradient has also been proposed as the driving force of E1S uptake with a (H(+):E1S) stoichiometry of (1:1). In terms of biological role, has estrone 3-sulfate (E1S) transport activity comparable with the full-length isoform 1. This Homo sapiens (Human) protein is Solute carrier organic anion transporter family member 2B1.